Here is a 320-residue protein sequence, read N- to C-terminus: Phosphatidylserine decarboxylase proenzyme (320 aa).

Catalysis depends on charge relay system; for autoendoproteolytic cleavage activity residues aspartate 90, histidine 147, and serine 254. Residue serine 254 is the Schiff-base intermediate with substrate; via pyruvic acid; for decarboxylase activity of the active site. The residue at position 254 (serine 254) is a Pyruvic acid (Ser); by autocatalysis. The tract at residues 290-320 (TAAAEPAPLPEEEIRAEHRASPLVDDKQDQG) is disordered. The span at 301–320 (EEIRAEHRASPLVDDKQDQG) shows a compositional bias: basic and acidic residues.

Belongs to the phosphatidylserine decarboxylase family. PSD-B subfamily. Prokaryotic type I sub-subfamily. In terms of assembly, heterodimer of a large membrane-associated beta subunit and a small pyruvoyl-containing alpha subunit. The cofactor is pyruvate. In terms of processing, is synthesized initially as an inactive proenzyme. Formation of the active enzyme involves a self-maturation process in which the active site pyruvoyl group is generated from an internal serine residue via an autocatalytic post-translational modification. Two non-identical subunits are generated from the proenzyme in this reaction, and the pyruvate is formed at the N-terminus of the alpha chain, which is derived from the carboxyl end of the proenzyme. The autoendoproteolytic cleavage occurs by a canonical serine protease mechanism, in which the side chain hydroxyl group of the serine supplies its oxygen atom to form the C-terminus of the beta chain, while the remainder of the serine residue undergoes an oxidative deamination to produce ammonia and the pyruvoyl prosthetic group on the alpha chain. During this reaction, the Ser that is part of the protease active site of the proenzyme becomes the pyruvoyl prosthetic group, which constitutes an essential element of the active site of the mature decarboxylase.

The protein resides in the cell membrane. It catalyses the reaction a 1,2-diacyl-sn-glycero-3-phospho-L-serine + H(+) = a 1,2-diacyl-sn-glycero-3-phosphoethanolamine + CO2. Its pathway is phospholipid metabolism; phosphatidylethanolamine biosynthesis; phosphatidylethanolamine from CDP-diacylglycerol: step 2/2. Functionally, catalyzes the formation of phosphatidylethanolamine (PtdEtn) from phosphatidylserine (PtdSer). This is Phosphatidylserine decarboxylase proenzyme from Klebsiella pneumoniae subsp. pneumoniae (strain ATCC 700721 / MGH 78578).